Here is a 91-residue protein sequence, read N- to C-terminus: Conotoxin VnMKLT1-021 (91 aa).

The N-terminal stretch at 1 to 22 is a signal peptide; the sequence is MKLTCVMIVAVLFLTAWTFVTA. The propeptide occupies 23–57; sequence DDPRDGPDTAVGWRKLFSEARDEMKNREASKLNER. 3 cysteine pairs are disulfide-bonded: Cys-59–Cys-78, Cys-66–Cys-82, and Cys-77–Cys-86.

The protein belongs to the conotoxin O1 superfamily. As to expression, expressed by the venom duct.

It localises to the secreted. This is Conotoxin VnMKLT1-021 from Conus ventricosus (Mediterranean cone).